The following is a 138-amino-acid chain: Putative pre-16S rRNA nuclease (138 aa).

It belongs to the YqgF nuclease family.

It is found in the cytoplasm. In terms of biological role, could be a nuclease involved in processing of the 5'-end of pre-16S rRNA. The polypeptide is Putative pre-16S rRNA nuclease (Salmonella schwarzengrund (strain CVM19633)).